The sequence spans 916 residues: Rab3 GTPase-activating protein catalytic subunit (916 aa).

The tract at residues 530 to 574 is disordered; the sequence is NSKRKSEGMVGKASSEEEEDEDDDEGEFFDCDDLTAGAGSPTKAV. Phosphoserine is present on residues Ser-543 and Ser-544. A compositionally biased stretch (acidic residues) spans 545–562; that stretch reads EEEEDEDDDEGEFFDCDD.

The protein belongs to the Rab3-GAP catalytic subunit family. As to quaternary structure, the Rab3 GTPase-activating complex is a heterodimer composed of Rab3GAP1 and Rab3-GAP.

Its subcellular location is the cytoplasm. Its function is as follows. Catalytic subunit of the Rab3 GTPase-activating (Rab3GAP) complex composed of Rab3-GAP and Rab3GAP1, which has both GTPase-activating protein (GAP) activity towards Rab3, and guanine nucleotide exchange factor (GEF) activity towards Rab18. As part of the Rab3GAP complex, required for the rapid induction and sustained expression of synaptic homeostasis at the neuromuscular junction (NMJ). Also participates in the regulation of autophagy in tissues such as larval fat cells and adult muscles. The Rab3GAP complex, acts as a GAP for Rab3 by converting active Rab3-GTP to the inactive form Rab3-GDP. At the neuromuscular junction (NMJ), forms a presynaptic signaling mechanism with Rab3 that regulates progression of synaptic homeostasis at a late stage of vesicle release. Within this mechanism Rab3-GTP acts, directly or indirectly, to inhibit the progression of synaptic homeostasis, and Rab3-GAP functions to inactivate this action of Rab3-GTP. The Rab3GAP complex, acts as a GEF for Rab18 by promoting the conversion of inactive Rab18-GDP to the active form Rab18-GTP. Regulates autophagy as part of a Rab3GAP-Rab18 module. Once Rab18 is activated by the GEF Rab3GAP complex, the Rab3GAP-Rab18 module localizes to autophagosomes, and regulates autolysosome formation and maturation together with the Rab18 interacting effector, the PI3K/Vps34 Complex I. The polypeptide is Rab3 GTPase-activating protein catalytic subunit (Drosophila melanogaster (Fruit fly)).